The sequence spans 833 residues: Leucine--tRNA ligase (833 aa).

A 'HIGH' region motif is present at residues 41–52; it reads PYPSGAGLHVGH. A 'KMSKS' region motif is present at residues 610-614; that stretch reads KMSKS. ATP is bound at residue Lys-613.

Belongs to the class-I aminoacyl-tRNA synthetase family.

It localises to the cytoplasm. It catalyses the reaction tRNA(Leu) + L-leucine + ATP = L-leucyl-tRNA(Leu) + AMP + diphosphate. This is Leucine--tRNA ligase from Streptococcus pneumoniae (strain 70585).